Consider the following 261-residue polypeptide: Succinate dehydrogenase iron-sulfur subunit (261 aa).

Residues 1–23 (MAELRLPPNSVVKKGKEHKEQEE) form a disordered region. The 2Fe-2S ferredoxin-type domain maps to 28 to 119 (RKVKIYRYDP…DIKIYPLPHM (92 aa)). Residues C80, C85, and C100 each coordinate [2Fe-2S] cluster. Residues 161-191 (GREKLDGLYECILCACCSTSCPSYWWNGDKY) form the 4Fe-4S ferredoxin-type domain. [4Fe-4S] cluster contacts are provided by C171, C174, and C177. C181 lines the [3Fe-4S] cluster pocket. W186 contacts a ubiquinone. Residues C228 and C234 each coordinate [3Fe-4S] cluster. C238 lines the [4Fe-4S] cluster pocket.

The protein belongs to the succinate dehydrogenase/fumarate reductase iron-sulfur protein family. Part of an enzyme complex containing four subunits: a flavoprotein, an iron-sulfur, cytochrome b-556, and a hydrophobic anchor protein. [2Fe-2S] cluster serves as cofactor. [3Fe-4S] cluster is required as a cofactor. The cofactor is [4Fe-4S] cluster.

The catalysed reaction is a quinone + succinate = fumarate + a quinol. It functions in the pathway carbohydrate metabolism; tricarboxylic acid cycle; fumarate from succinate (bacterial route): step 1/1. The sequence is that of Succinate dehydrogenase iron-sulfur subunit (sdhB) from Rickettsia felis (strain ATCC VR-1525 / URRWXCal2) (Rickettsia azadi).